The primary structure comprises 679 residues: MAEGDGAPPSSWEKDLAEALEEGGCDLETVRNIIQGRQLPADLRAKVWKIALNVVGKGDSLASWDGCLDLPEQSIIHKDCQELIDRLSVPEDEKSVLLLDIESVITFYCKSRNVKYSSCLGWIHLLRPLVHLRLPRSDLYNCFYAIMNKYIPRDCFLKGRPFHLFRLLLQYHEPELCSFLDTKKMTPDSYALNWLGSLFSYYCSTEVTQAIWDGYLQQADPFFIYFLMLIILVNAKDVILAQESEKEEMLKFLETSPANLEVEDIEDLFSLAQYYCSKTPASFRKDNHSLFGSSLLGLKDDDTDLSQALCLAVSVSEILQANQQQGEGVRFFVVDCRPAEQYNAGHLSTAFHLDSDLMLQNPSEFAQSVKSLLEAQKQSIESGSIAGGEHLCFMGSGREEEDMYMNMVLAHFLQKNKEYVSIARGGFMALQQHLADINVEGPENGYGHWIASTSGSRSSINSSVDGDSPNGSSDGKGVKSLVNKMTVALKTKSVNVKEKVISFIENTSTPVDRHVSSSDRVGKPYRGVKPVFSIGDEEEYDTDGIDSSSMSDDDRKEVVNIQTWINKPDVKYNFPCNEVKENGHMFPSHLLVTATNMYCLREIPSRKGLAYIQSRQALNSVVKITSKKKHPELITFKYGNSNTSGIEILAVERYLIPNAGDATKAIKQQIMKVLDALES.

Residues Gln38–Ala219 form the Rab-GAP TBC domain. One can recognise a Rhodanese domain in the interval Glu327 to Val439. Low complexity predominate over residues Ser454–Ser468. The interval Ser454–Val478 is disordered.

It is found in the golgi apparatus. It localises to the trans-Golgi network. Putative Rab GTPase-activating protein which plays a role in vesicular trafficking. Involved in endosome-to-Golgi trafficking. Acts as a bridging protein by binding simultaneously to golgins, located at the trans-Golgi, and to the WASH complex, located on endosome-derived vesicles. Plays a role in brain development. May act as a general inhibitor of innate immunity signaling. The sequence is that of TBC1 domain family member 23 (TBC1D23) from Gallus gallus (Chicken).